The following is a 119-amino-acid chain: UPF0342 protein GTNG_0551 (119 aa).

Belongs to the UPF0342 family.

The protein is UPF0342 protein GTNG_0551 of Geobacillus thermodenitrificans (strain NG80-2).